Consider the following 497-residue polypeptide: Nucleoside transporter 1 (497 aa).

Residues M1–E26 lie on the Cytoplasmic side of the membrane. Residues F27–V47 form a helical membrane-spanning segment. Topologically, residues F48 to N77 are extracellular. The helical transmembrane segment at V78 to L98 threads the bilayer. Topologically, residues L99–M107 are cytoplasmic. The chain crosses the membrane as a helical span at residues L108–V128. Residues P129–E135 are Extracellular-facing. Residues A136–F156 form a helical membrane-spanning segment. Residues E157–T172 lie on the Cytoplasmic side of the membrane. Residues S173–V193 form a helical membrane-spanning segment. Over K194–S208 the chain is Extracellular. The chain crosses the membrane as a helical span at residues Y209–M229. Topologically, residues R230–K337 are cytoplasmic. Basic and acidic residues predominate over residues N286–E299. The disordered stretch occupies residues N286–E316. A helical membrane pass occupies residues W338–A358. Over T359–M361 the chain is Extracellular. Residues F362 to L382 traverse the membrane as a helical segment. The Cytoplasmic portion of the chain corresponds to G383–R400. The chain crosses the membrane as a helical span at residues W401–S421. At Y422 to Y432 the chain is on the extracellular side. The helical transmembrane segment at V433–G453 threads the bilayer. At P454–R465 the chain is on the cytoplasmic side. The chain crosses the membrane as a helical span at residues F466–L486. The Extracellular portion of the chain corresponds to S487–Y497.

This sequence belongs to the SLC29A/ENT transporter (TC 2.A.57) family.

The protein resides in the cell membrane. It carries out the reaction adenosine(in) = adenosine(out). The catalysed reaction is hypoxanthine(out) = hypoxanthine(in). The enzyme catalyses inosine(in) = inosine(out). It catalyses the reaction uridine(out) = uridine(in). It carries out the reaction cytidine(in) = cytidine(out). Its function is as follows. Nucleoside transporter with broad substrate specificity. Transports adenosine with high affinity. Can also transport hypoxanthine, inosine, uridine and cytidine. This is Nucleoside transporter 1 from Crithidia fasciculata.